A 61-amino-acid chain; its full sequence is Photosystem II reaction center protein K (61 aa).

Positions 1 to 24 (MLNIFNLVCICIHSVLYSSSFFSA) are excised as a propeptide. The helical transmembrane segment at 36–56 (IVDIMPVIPLLFFLLAFVWQA) threads the bilayer.

The protein belongs to the PsbK family. PSII is composed of 1 copy each of membrane proteins PsbA, PsbB, PsbC, PsbD, PsbE, PsbF, PsbH, PsbI, PsbJ, PsbK, PsbL, PsbM, PsbT, PsbX, PsbY, PsbZ, Psb30/Ycf12, at least 3 peripheral proteins of the oxygen-evolving complex and a large number of cofactors. It forms dimeric complexes.

Its subcellular location is the plastid. It localises to the chloroplast thylakoid membrane. One of the components of the core complex of photosystem II (PSII). PSII is a light-driven water:plastoquinone oxidoreductase that uses light energy to abstract electrons from H(2)O, generating O(2) and a proton gradient subsequently used for ATP formation. It consists of a core antenna complex that captures photons, and an electron transfer chain that converts photonic excitation into a charge separation. This is Photosystem II reaction center protein K from Glycine max (Soybean).